A 167-amino-acid chain; its full sequence is 2-amino-4-hydroxy-6-hydroxymethyldihydropteridine pyrophosphokinase (167 aa).

The protein belongs to the HPPK family.

The enzyme catalyses 6-hydroxymethyl-7,8-dihydropterin + ATP = (7,8-dihydropterin-6-yl)methyl diphosphate + AMP + H(+). Its pathway is cofactor biosynthesis; tetrahydrofolate biosynthesis; 2-amino-4-hydroxy-6-hydroxymethyl-7,8-dihydropteridine diphosphate from 7,8-dihydroneopterin triphosphate: step 4/4. Its function is as follows. Catalyzes the transfer of pyrophosphate from adenosine triphosphate (ATP) to 6-hydroxymethyl-7,8-dihydropterin, an enzymatic step in folate biosynthesis pathway. This Bacillus subtilis (strain 168) protein is 2-amino-4-hydroxy-6-hydroxymethyldihydropteridine pyrophosphokinase (folK).